The following is a 1077-amino-acid chain: Deoxyribonuclease CdiA (1077 aa).

Residues Ile-67 to Ser-384 are FHA-2. Polar residues predominate over residues Gln-531–Gly-546. A disordered region spans residues Gln-531–Glu-555. The short motif at Val-781 to Asn-784 is the VENN CT cleavage motif element. The tract at residues Met-954–Lys-1077 is DNase activity.

Interacts with cognate immunity protein CdiI-YPIII, which blocks its toxic DNase activity. The cofactor is Zn(2+).

The protein resides in the target cell. It localises to the target cell cytoplasm. Toxic component of a toxin-immunity protein module, which functions as a cellular contact-dependent growth inhibition (CDI) system. CDI modules allow bacteria to communicate with and inhibit the growth of closely related neighboring bacteria in a contact-dependent fashion. The C-terminal 123 residues (954-1077) has DNase activity in the presence of Zn(2+), converting supercoiled DNA into open-circular form. Toxic activity is neutralized by coexpression of the cognate immunity protein CdiI-YPIII, but not by non-cognate immunity proteins from other toxin-immunity modules. Expression of the DNase domain as a chimera allows bacteria to attack other non-immune bacteria which become filamentous and have lost DNA staining. Its function is as follows. The CdiA protein is thought to be exported from the cell through the central lumen of CdiB, the other half of its two-partner system (TPS). The TPS domain probably remains associated with CdiB while the FHA-1 domain forms an extended filament with the receptor-binding domain (RBD) at its extremity; in the secretion arrested state the C-terminus of the RBD and YP domains form a hairpin-like structure as the FHA-2, PT and CT domains are periplasmic. The YP domain is probably responsible for this arrest at the point where it re-enters the host cell periplasm. Upon binding to a target cell outer membrane receptor a signal is transmitted to activate secretion. The filament elongates slightly, the rest of CdiA is secreted and the FHA-2 domain becomes stably associated with the target cell's outer membrane where it facilitates entry of the toxic CT domain into the target cell periplasm. From there the toxic CT domain is cleaved and gains access to the target cell cytoplasm via an inner membrane protein. This is Deoxyribonuclease CdiA from Yersinia pseudotuberculosis serotype O:3 (strain YPIII).